The chain runs to 502 residues: Hexose transporter 1 (502 aa).

Residues 1–26 are Cytoplasmic-facing; the sequence is MKKSSKEISSSQSLKNGGSDHFFNTS. Residues 27–47 form a helical membrane-spanning segment; it reads LMYVLAACLASFIFGYQVSVL. Topologically, residues 48-76 are extracellular; that stretch reads NTIKNFIVIEFGWCTGNKVECDDSTLKSS. An intrachain disulfide couples cysteine 61 to cysteine 68. The chain crosses the membrane as a helical span at residues 77 to 97; sequence FLLASVFIGAVVGSGFSGYLV. Residues 98–102 lie on the Cytoplasmic side of the membrane; sequence QHGRR. Residues 103–123 traverse the membrane as a helical segment; sequence FSLLVIYNFFILVSILTSITH. The Extracellular portion of the chain corresponds to 124 to 132; the sequence is HFHTILFSR. A helical membrane pass occupies residues 133 to 153; that stretch reads LLSGFGIGLITVSVPMYISEM. Over 154-163 the chain is Cytoplasmic; the sequence is THKDKKGAYG. Residues 164–184 traverse the membrane as a helical segment; that stretch reads VLHQLFITFGIFVAVLLGMAM. Glutamine 167 contributes to the alpha-D-glucose binding site. Glutamine 167 contacts beta-D-glucose. The Extracellular portion of the chain corresponds to 185 to 205; sequence GEAPDAKSVDALGEFQKIWWR. The helical transmembrane segment at 206–226 threads the bilayer; it reads LMFFFPCLISILGIVLLTFFY. Topologically, residues 227–291 are cytoplasmic; it reads KEETPYYLFE…RAMQIPSYRN (65 aa). The helical transmembrane segment at 292 to 312 threads the bilayer; it reads VILLGCILSGLQQFTGINVLV. Alpha-D-glucose contacts are provided by glutamine 303, glutamine 304, and asparagine 309. Glutamine 303 contacts beta-D-glucose. Residue asparagine 309 coordinates beta-D-glucose. Residues 313–329 lie on the Extracellular side of the membrane; that stretch reads SNSNELYKEFLSNKLIT. A helical transmembrane segment spans residues 330-350; the sequence is TLSVIMTVVNFLMTFPAIYIV. Beta-D-glucose is bound at residue asparagine 339. Over 351–356 the chain is Cytoplasmic; the sequence is EKLGRK. Residues 357–377 form a helical membrane-spanning segment; the sequence is TLLLCGCAGVICAFLPTAIAN. Residues 378-390 lie on the Extracellular side of the membrane; that stretch reads QIDSTSAFVKNLS. A helical membrane pass occupies residues 391–411; sequence IAATFVMIISFAVSYGPVLWI. Tryptophan 410 lines the alpha-D-glucose pocket. Topologically, residues 412–427 are cytoplasmic; sequence YLHEMFPSEIKDSAAS. Residues 428-448 form a helical membrane-spanning segment; it reads LASLVNWVCAIIVVFPSDIII. Topologically, residues 449–453 are extracellular; the sequence is KKSPT. A helical membrane pass occupies residues 454-474; sequence ILFFIFSGMSILSFLFIFFFI. At 475 to 502 the chain is on the cytoplasmic side; it reads KETKGGEIGTSPYITMEERQKHMGKSAV.

Belongs to the major facilitator superfamily. Sugar transporter (TC 2.A.1.1) family. Homodimer.

It localises to the cell membrane. It catalyses the reaction D-glucose(out) = D-glucose(in). It carries out the reaction D-fructose(out) = D-fructose(in). The enzyme catalyses D-galactose(in) = D-galactose(out). The catalysed reaction is D-mannose(out) = D-mannose(in). It catalyses the reaction D-glucosamine(out) = D-glucosamine(in). It carries out the reaction D-xylose(out) = D-xylose(in). Inhibited by compound 3361 (3-O-((undec-10-en)-1-yl)-D-glucose). Sodium-independent facilitative hexose transporter. Can transport D-glucose and D-fructose. Can transport D-mannose, D-galactose, D-xylose and D-glucosamine. This is Hexose transporter 1 from Plasmodium vivax (strain Brazil I).